Here is a 309-residue protein sequence, read N- to C-terminus: Probable pyridoxal 5'-phosphate synthase subunit PDX1 (309 aa).

D40 contacts D-ribose 5-phosphate. K97 acts as the Schiff-base intermediate with D-ribose 5-phosphate in catalysis. G169 is a D-ribose 5-phosphate binding site. R181 is a D-glyceraldehyde 3-phosphate binding site. Residues G230 and 251 to 252 (GS) contribute to the D-ribose 5-phosphate site.

The protein belongs to the PdxS/SNZ family.

The catalysed reaction is aldehydo-D-ribose 5-phosphate + D-glyceraldehyde 3-phosphate + L-glutamine = pyridoxal 5'-phosphate + L-glutamate + phosphate + 3 H2O + H(+). The protein operates within cofactor biosynthesis; pyridoxal 5'-phosphate biosynthesis. Catalyzes the formation of pyridoxal 5'-phosphate from ribose 5-phosphate (RBP), glyceraldehyde 3-phosphate (G3P) and ammonia. The ammonia is provided by PDX2. Can also use ribulose 5-phosphate and dihydroxyacetone phosphate as substrates, resulting from enzyme-catalyzed isomerization of RBP and G3P, respectively. Also plays an indirect role in resistance to singlet oxygen-generating photosensitizers. This Hevea brasiliensis (Para rubber tree) protein is Probable pyridoxal 5'-phosphate synthase subunit PDX1 (PDX1).